We begin with the raw amino-acid sequence, 368 residues long: Putative agmatine deiminase (368 aa).

C359 functions as the Amidino-cysteine intermediate in the catalytic mechanism.

Belongs to the agmatine deiminase family.

It carries out the reaction agmatine + H2O = N-carbamoylputrescine + NH4(+). This is Putative agmatine deiminase from Pectobacterium atrosepticum (strain SCRI 1043 / ATCC BAA-672) (Erwinia carotovora subsp. atroseptica).